We begin with the raw amino-acid sequence, 101 residues long: Apolipoprotein C-II (101 aa).

The first 22 residues, Met1–Gly22, serve as a signal peptide directing secretion. The tract at residues Thr66–Ile74 is lipid binding. The segment at Ser78–Asp101 is lipoprotein lipase cofactor.

It belongs to the apolipoprotein C2 family. Proapolipoprotein C-II is synthesized as a sialic acid containing glycoprotein which is subsequently desialylated prior to its proteolytic processing. In terms of processing, proapolipoprotein C-II, the major form found in plasma undergoes proteolytic cleavage of its N-terminal hexapeptide to generate apolipoprotein C-II, which occurs as the minor form in plasma.

It localises to the secreted. Component of chylomicrons, very low-density lipoproteins (VLDL), low-density lipoproteins (LDL), and high-density lipoproteins (HDL) in plasma. Plays an important role in lipoprotein metabolism as an activator of lipoprotein lipase. Both proapolipoprotein C-II and apolipoprotein C-II can activate lipoprotein lipase. The polypeptide is Apolipoprotein C-II (APOC2) (Capra hircus aegagrus (Wild goat)).